The sequence spans 623 residues: Glutathione import ATP-binding protein GsiA (623 aa).

2 ABC transporter domains span residues Val-15–Leu-269 and Leu-325–Met-564. Residues Gly-49–Ser-56 and Gly-357–Ser-364 contribute to the ATP site.

This sequence belongs to the ABC transporter superfamily. Glutathione importer (TC 3.A.1.5.11) family. The complex is composed of two ATP-binding proteins (GsiA), two transmembrane proteins (GsiC and GsiD) and a solute-binding protein (GsiB).

The protein localises to the cell inner membrane. It catalyses the reaction glutathione(out) + ATP + H2O = glutathione(in) + ADP + phosphate + H(+). In terms of biological role, part of the ABC transporter complex GsiABCD involved in glutathione import. Responsible for energy coupling to the transport system. This Salmonella choleraesuis (strain SC-B67) protein is Glutathione import ATP-binding protein GsiA.